The following is a 372-amino-acid chain: Queuine tRNA-ribosyltransferase (372 aa).

The active-site Proton acceptor is the D89. Residues D89–F93, D161, and G232 each bind substrate. Residues G262–S268 form an RNA binding region. The active-site Nucleophile is D281. The RNA binding; important for wobble base 34 recognition stretch occupies residues T286–R290. C319, C321, C324, and H351 together coordinate Zn(2+).

It belongs to the queuine tRNA-ribosyltransferase family. As to quaternary structure, homodimer. Within each dimer, one monomer is responsible for RNA recognition and catalysis, while the other monomer binds to the replacement base PreQ1. Zn(2+) serves as cofactor.

It carries out the reaction 7-aminomethyl-7-carbaguanine + guanosine(34) in tRNA = 7-aminomethyl-7-carbaguanosine(34) in tRNA + guanine. It participates in tRNA modification; tRNA-queuosine biosynthesis. Catalyzes the base-exchange of a guanine (G) residue with the queuine precursor 7-aminomethyl-7-deazaguanine (PreQ1) at position 34 (anticodon wobble position) in tRNAs with GU(N) anticodons (tRNA-Asp, -Asn, -His and -Tyr). Catalysis occurs through a double-displacement mechanism. The nucleophile active site attacks the C1' of nucleotide 34 to detach the guanine base from the RNA, forming a covalent enzyme-RNA intermediate. The proton acceptor active site deprotonates the incoming PreQ1, allowing a nucleophilic attack on the C1' of the ribose to form the product. After dissociation, two additional enzymatic reactions on the tRNA convert PreQ1 to queuine (Q), resulting in the hypermodified nucleoside queuosine (7-(((4,5-cis-dihydroxy-2-cyclopenten-1-yl)amino)methyl)-7-deazaguanosine). This chain is Queuine tRNA-ribosyltransferase, found in Chlamydia muridarum (strain MoPn / Nigg).